A 576-amino-acid chain; its full sequence is Gamma-aminobutyric acid receptor subunit beta (576 aa).

The N-terminal stretch at 1–29 (MSDSMLYQTLQTCLPKSRLITLWLAFTLA) is a signal peptide. Residues 30–268 (MLIQEPRRHA…IQFVRSMGYY (239 aa)) lie on the Extracellular side of the membrane. N-linked (GlcNAc...) asparagine glycosylation occurs at N56. C183 and C197 are disulfide-bonded. The N-linked (GlcNAc...) asparagine glycan is linked to N251. 3 consecutive transmembrane segments (helical) span residues 269–289 (LIQI…SFWL), 298–320 (VALG…AALP), and 330–350 (VYLG…ATVG). The Cytoplasmic segment spans residues 351 to 540 (YMAKRIQMRK…TPSDIDKYSR (190 aa)). 2 disordered regions span residues 372–418 (QKKQ…QTVS) and 452–507 (HDPK…GDAE). The segment covering 398–412 (HGHGHGHHSHGHPHV) has biased composition (basic residues). The span at 475–490 (PVGPHGPGPQGPPGGP) shows a compositional bias: pro residues. Positions 491–501 (PAGGGGGGAPP) are enriched in gly residues. A helical transmembrane segment spans residues 541 to 561 (IVFPVCFVCFNLMYWIIYLHV).

It belongs to the ligand-gated ion channel (TC 1.A.9) family. Gamma-aminobutyric acid receptor (TC 1.A.9.5) subfamily. In terms of assembly, homomultimer.

The protein resides in the postsynaptic cell membrane. The protein localises to the cell membrane. Its function is as follows. GABA, an inhibitory neurotransmitter, mediates neuronal inhibition by binding to the GABA receptor and opening an integral chloride channel. The sequence is that of Gamma-aminobutyric acid receptor subunit beta from Musca domestica (House fly).